A 342-amino-acid polypeptide reads, in one-letter code: Protein-glutamate methylesterase/protein-glutamine glutaminase 1 (342 aa).

Residues 2–119 form the Response regulatory domain; the sequence is RVAIVNDMPL…GDPKAAAQRL (118 aa). D53 is subject to 4-aspartylphosphate. One can recognise a CheB-type methylesterase domain in the interval 146–329; it reads SDTDAALVVI…LPLGDIAPRL (184 aa). Catalysis depends on residues S158, H185, and D278.

This sequence belongs to the CheB family. In terms of processing, phosphorylated by CheA. Phosphorylation of the N-terminal regulatory domain activates the methylesterase activity.

It is found in the cytoplasm. The catalysed reaction is [protein]-L-glutamate 5-O-methyl ester + H2O = L-glutamyl-[protein] + methanol + H(+). It carries out the reaction L-glutaminyl-[protein] + H2O = L-glutamyl-[protein] + NH4(+). Functionally, involved in chemotaxis. Part of a chemotaxis signal transduction system that modulates chemotaxis in response to various stimuli. Catalyzes the demethylation of specific methylglutamate residues introduced into the chemoreceptors (methyl-accepting chemotaxis proteins or MCP) by CheR. Also mediates the irreversible deamidation of specific glutamine residues to glutamic acid. This chain is Protein-glutamate methylesterase/protein-glutamine glutaminase 1, found in Bordetella avium (strain 197N).